Reading from the N-terminus, the 222-residue chain is Charged multivesicular body protein 3 (222 aa).

The N-myristoyl glycine moiety is linked to residue glycine 2. The interval 2–113 (GLFGKTQEKP…LQKSTEVMKA (112 aa)) is intramolecular interaction with C-terminus. Positions 22 to 54 (KIRKEMRVVDRQIRDIQREEEKVKRSVKDAAKK) form a coiled coil. Important for autoinhibitory function stretches follow at residues 59–64 (VCVVLA) and 168–169 (IL). A coiled-coil region spans residues 141 to 222 (EEMLEDTFES…MQSRLATLRS (82 aa)). Residues 151–220 (MDDQEEMEEE…EAMQSRLATL (70 aa)) form an intramolecular interaction with N-terminus region. Residues 151–222 (MDDQEEMEEE…MQSRLATLRS (72 aa)) form an interaction with VPS4A region. Lysine 179 is covalently cross-linked (Glycyl lysine isopeptide (Lys-Gly) (interchain with G-Cter in ubiquitin)). The segment at 180–222 (APSKVTDALPEPEPSGAMAASEDEEEEEEALEAMQSRLATLRS) is disordered. Interaction with STAMBP stretches follow at residues 196–222 (AMAA…TLRS), 203–207 (EEEEE), and 221–222 (RS). Phosphoserine is present on serine 200. Positions 200–210 (SEDEEEEEEAL) are enriched in acidic residues. Residues 201-211 (EDEEEEEEALE) carry the MIT-interacting motif motif.

Belongs to the SNF7 family. Probable core component of the endosomal sorting required for transport complex III (ESCRT-III). ESCRT-III components are thought to multimerize to form a flat lattice on the perimeter membrane of the endosome. Several assembly forms of ESCRT-III may exist that interact and act sequentially. Forms a metastable monomer in solution; its core structure (without part of the putative autoinhibitory C-terminal acidic region) oligomerizes into a flat lattice via two different dimerization interfaces. In vitro, heteromerizes with CHMP2A (but not CHMP4) to form helical tubular structures that expose membrane-interacting sites on the outside whereas VPS4B can associate on the inside of the tubule. May interact with IGFBP7; the relevance of such interaction however remains unclear. Interacts with CHMP2A. Interacts with CHMP4A; the interaction requires the release of CHMP4A autoinhibition. Interacts with VPS4A. Interacts with STAMBP; the interaction appears to relieve the autoinhibition of CHMP3. Interacts with VTA1.

Its subcellular location is the cytoplasm. The protein localises to the cytosol. The protein resides in the membrane. It is found in the endosome. It localises to the late endosome membrane. Probable core component of the endosomal sorting required for transport complex III (ESCRT-III) which is involved in multivesicular bodies (MVBs) formation and sorting of endosomal cargo proteins into MVBs. MVBs contain intraluminal vesicles (ILVs) that are generated by invagination and scission from the limiting membrane of the endosome and mostly are delivered to lysosomes enabling degradation of membrane proteins, such as stimulated growth factor receptors, lysosomal enzymes and lipids. The MVB pathway appears to require the sequential function of ESCRT-O, -I,-II and -III complexes. ESCRT-III proteins mostly dissociate from the invaginating membrane before the ILV is released. The ESCRT machinery also functions in topologically equivalent membrane fission events, such as the terminal stages of cytokinesis and the budding of enveloped viruses (lentiviruses). ESCRT-III proteins are believed to mediate the necessary vesicle extrusion and/or membrane fission activities, possibly in conjunction with the AAA ATPase VPS4. Selectively binds to phosphatidylinositol 3,5-bisphosphate PtdIns(3,5)P2 and PtdIns(3,4)P2 in preference to other phosphoinositides tested. Involved in late stages of cytokinesis. Plays a role in endosomal sorting/trafficking of EGF receptor. This is Charged multivesicular body protein 3 (CHMP3) from Pongo abelii (Sumatran orangutan).